We begin with the raw amino-acid sequence, 229 residues long: ATP synthase subunit a (229 aa).

Helical transmembrane passes span 25-45 (ADAI…SMLA), 82-102 (FFPL…IGLV), 104-124 (GFFP…IVFV), 142-162 (FLGP…IGHF), 181-201 (LVLM…MMLM), and 202-222 (GVLV…IYIQ).

It belongs to the ATPase A chain family. In terms of assembly, F-type ATPases have 2 components, CF(1) - the catalytic core - and CF(0) - the membrane proton channel. CF(1) has five subunits: alpha(3), beta(3), gamma(1), delta(1), epsilon(1). CF(0) has three main subunits: a(1), b(2) and c(9-12). The alpha and beta chains form an alternating ring which encloses part of the gamma chain. CF(1) is attached to CF(0) by a central stalk formed by the gamma and epsilon chains, while a peripheral stalk is formed by the delta and b chains.

It localises to the cell inner membrane. Its function is as follows. Key component of the proton channel; it plays a direct role in the translocation of protons across the membrane. This is ATP synthase subunit a from Geotalea uraniireducens (strain Rf4) (Geobacter uraniireducens).